We begin with the raw amino-acid sequence, 846 residues long: Leucine--tRNA ligase (846 aa).

Residues 47 to 57 (PYPSGRIHMGH) carry the 'HIGH' region motif. The short motif at 621–625 (KMSKS) is the 'KMSKS' region element. Lysine 624 lines the ATP pocket.

The protein belongs to the class-I aminoacyl-tRNA synthetase family.

Its subcellular location is the cytoplasm. The catalysed reaction is tRNA(Leu) + L-leucine + ATP = L-leucyl-tRNA(Leu) + AMP + diphosphate. The protein is Leucine--tRNA ligase of Zymomonas mobilis subsp. mobilis (strain ATCC 31821 / ZM4 / CP4).